A 155-amino-acid chain; its full sequence is 6,7-dimethyl-8-ribityllumazine synthase (155 aa).

5-amino-6-(D-ribitylamino)uracil-binding positions include F22, 57 to 59 (AVE), and 81 to 83 (TVI). 86 to 87 (GT) contacts (2S)-2-hydroxy-3-oxobutyl phosphate. The active-site Proton donor is H89. F114 lines the 5-amino-6-(D-ribitylamino)uracil pocket. (2S)-2-hydroxy-3-oxobutyl phosphate is bound at residue R128.

It belongs to the DMRL synthase family. In terms of assembly, forms an icosahedral capsid composed of 60 subunits, arranged as a dodecamer of pentamers.

The enzyme catalyses (2S)-2-hydroxy-3-oxobutyl phosphate + 5-amino-6-(D-ribitylamino)uracil = 6,7-dimethyl-8-(1-D-ribityl)lumazine + phosphate + 2 H2O + H(+). It functions in the pathway cofactor biosynthesis; riboflavin biosynthesis; riboflavin from 2-hydroxy-3-oxobutyl phosphate and 5-amino-6-(D-ribitylamino)uracil: step 1/2. Catalyzes the formation of 6,7-dimethyl-8-ribityllumazine by condensation of 5-amino-6-(D-ribitylamino)uracil with 3,4-dihydroxy-2-butanone 4-phosphate. This is the penultimate step in the biosynthesis of riboflavin. The sequence is that of 6,7-dimethyl-8-ribityllumazine synthase from Psychromonas ingrahamii (strain DSM 17664 / CCUG 51855 / 37).